Consider the following 944-residue polypeptide: MTSIAEKWQKEWEKAKIFEANPDRTRNKFFTTVAFPYPNSPFHLGHGRTYVTCDIYARYMRMKGYNVLFPMGFHYTGTPIIAMADDVAKGDKELIDIFKNIYEIPDNVISKLADPLFMANYFRDEIKKAMKEIGLSIDWRREFTTIDPEFSSFIVWQFNKLQEKGYIVRDTHPVGWCPVHHIPVGMHDTKGDMEPEIGEFVLIYFNSDLGILPAATLRPETVFGAIGIWVNPDVTYSIIELDGKKMIVSERAAFKLTFQFDNIKNLGSIKGSELTKYKAVNPITGKEIPIMAADFVDPNVATGIVMSVPAHAPFDYYYLKKNKQQDMQIVSVIQVEGQGDTLAKDLVEKTNPKNKDDLQKLTEQVYRIEYNKGKMKDVSSLVKPEFVNYFKSFIGLSVPEARQKVTEFLIEKGLGRKIYEIMNRPVYCRCGNEVVVKILKDQWFLDYGNPQWKALAKKLISNMKFIPPEIRKDFEFVTDWLQKRACARTRGLGTPLPWDKKWIIESLSDSTIYMAYYTISHKIRQYQLKPSQLTYDFWNYIMLGIGDIDKISSETGISKEIIREMRNEFLYWYPLDIRHSGKDLIPNHLSFFIFNHAAIFPEELWPKAIAVNGFVLYEGKKMSKSLRNIIPLRKALRIYSPDVVRIALTSTADMGSDVNFSDSYAKSVGEILRRYYEFIKELPKYDGEGSEFANNWLKAQVSSIVLSSTKNMDNIDFRSTINDILYSFDSYLREYIDMCKADGKEPNGKLLREVIETWIKLLAPFAPHFAEEIWHELGHTTFISLEKWPTAEESSEDLYYILIHEYHKRIIEDSQKIINYYYKGKPSIVKIYVAEQELMKVLREAVQILSNGGTLKQLMEKERPSDKKLANIIRKIYELAVELDDNMKKLILGYNINEREILELGTKYMSYKLGIPVEVYDVSKLDKSKYNKEALPLKPAIIVE.

Residues 36-46 carry the 'HIGH' region motif; it reads PYPNSPFHLGH. The 'KMSKS' region motif lies at 621–625; it reads KMSKS. Lys624 serves as a coordination point for ATP.

The protein belongs to the class-I aminoacyl-tRNA synthetase family.

The protein localises to the cytoplasm. It catalyses the reaction tRNA(Leu) + L-leucine + ATP = L-leucyl-tRNA(Leu) + AMP + diphosphate. In Sulfurisphaera tokodaii (strain DSM 16993 / JCM 10545 / NBRC 100140 / 7) (Sulfolobus tokodaii), this protein is Leucine--tRNA ligase 2.